Reading from the N-terminus, the 475-residue chain is Glutamate--tRNA ligase 1 (475 aa).

Positions 11 to 21 (PSPTGYLHIGG) match the 'HIGH' region motif. The 'KMSKS' region signature appears at 240 to 244 (KLSKR). Lysine 243 is an ATP binding site.

Belongs to the class-I aminoacyl-tRNA synthetase family. Glutamate--tRNA ligase type 1 subfamily. Monomer.

The protein resides in the cytoplasm. It catalyses the reaction tRNA(Glu) + L-glutamate + ATP = L-glutamyl-tRNA(Glu) + AMP + diphosphate. In terms of biological role, catalyzes the attachment of glutamate to tRNA(Glu) in a two-step reaction: glutamate is first activated by ATP to form Glu-AMP and then transferred to the acceptor end of tRNA(Glu). The sequence is that of Glutamate--tRNA ligase 1 from Methylobacterium radiotolerans (strain ATCC 27329 / DSM 1819 / JCM 2831 / NBRC 15690 / NCIMB 10815 / 0-1).